A 385-amino-acid chain; its full sequence is MGDEAEIKEHLKPQASSETMDKKHNVKGKRLWQKVKYQLVEFHSLPAYLRDNEYIIGHYRSEWPIKQILLSIFTIHNETLNVWTHLIGFFLFLALTIYTATKVPSVVDLHSLQHRLPDLLRKTDLHKLHSELMARLPSSPSSWHVMDLLYNCLPERFSHGNYTDMCVLHSVREDLANLIAPLIFRPITRWPFYAFLGGAMFCLLASSTCHLLSCHSERVSYIMLRLDYAGIAALIATSFYPPVYYSFMCDPFFCNLYLGFITILGIATVLVSLLPVFQSPEFRVVRASLFFGMGFSGLAPILHKLIIFWDQPEALHTTGYEILMGLLYGLGALVYATRIPERWMPGKFDIAGHSHQLFHVLVVAGAFTHYRAGLVYLKWRDIEGC.

The segment covering 1-12 (MGDEAEIKEHLK) has biased composition (basic and acidic residues). The disordered stretch occupies residues 1 to 22 (MGDEAEIKEHLKPQASSETMDK). Residues 1 to 79 (MGDEAEIKEH…LSIFTIHNET (79 aa)) are Cytoplasmic-facing. A helical membrane pass occupies residues 80–100 (LNVWTHLIGFFLFLALTIYTA). At 101 to 191 (TKVPSVVDLH…LIFRPITRWP (91 aa)) the chain is on the extracellular side. The chain crosses the membrane as a helical span at residues 192–212 (FYAFLGGAMFCLLASSTCHLL). The Cytoplasmic segment spans residues 213–228 (SCHSERVSYIMLRLDY). The helical transmembrane segment at 229–249 (AGIAALIATSFYPPVYYSFMC) threads the bilayer. Residues 250–256 (DPFFCNL) lie on the Extracellular side of the membrane. The helical transmembrane segment at 257-277 (YLGFITILGIATVLVSLLPVF) threads the bilayer. Residues 278–288 (QSPEFRVVRAS) lie on the Cytoplasmic side of the membrane. The helical transmembrane segment at 289 to 309 (LFFGMGFSGLAPILHKLIIFW) threads the bilayer. At 310–313 (DQPE) the chain is on the extracellular side. The helical transmembrane segment at 314-334 (ALHTTGYEILMGLLYGLGALV) threads the bilayer. Over 335 to 356 (YATRIPERWMPGKFDIAGHSHQ) the chain is Cytoplasmic. A helical transmembrane segment spans residues 357 to 377 (LFHVLVVAGAFTHYRAGLVYL).

Belongs to the ADIPOR family. Expressed in roots, leaves, stems and flowers.

Its subcellular location is the membrane. May play a role in abiotic stress response. The sequence is that of Heptahelical transmembrane protein 4 (HHP4) from Arabidopsis thaliana (Mouse-ear cress).